The sequence spans 152 residues: Large ribosomal subunit protein bL9 (152 aa).

It belongs to the bacterial ribosomal protein bL9 family.

Binds to the 23S rRNA. In Picosynechococcus sp. (strain ATCC 27264 / PCC 7002 / PR-6) (Agmenellum quadruplicatum), this protein is Large ribosomal subunit protein bL9.